A 229-amino-acid polypeptide reads, in one-letter code: Cytochrome c oxidase subunit 2 (229 aa).

The Mitochondrial intermembrane portion of the chain corresponds to 1–14; sequence MAQQAQLGLQDAAS. The chain crosses the membrane as a helical span at residues 15 to 45; it reads PIMEELIHFHDHTLTVVFLISVLIFYLIIVM. Topologically, residues 46 to 59 are mitochondrial matrix; the sequence is VTTTFMNKHSLDSQ. Residues 60–87 traverse the membrane as a helical segment; sequence EVEIVWTVMPAIVLITIALPSLRILYLT. At 88–229 the chain is on the mitochondrial intermembrane side; sequence DEISNPHLTI…ENWTTKVLAS (142 aa). Positions 161, 196, 198, 200, 204, and 207 each coordinate Cu cation. Glu-198 contributes to the Mg(2+) binding site.

Belongs to the cytochrome c oxidase subunit 2 family. Component of the cytochrome c oxidase (complex IV, CIV), a multisubunit enzyme composed of 14 subunits. The complex is composed of a catalytic core of 3 subunits MT-CO1, MT-CO2 and MT-CO3, encoded in the mitochondrial DNA, and 11 supernumerary subunits COX4I, COX5A, COX5B, COX6A, COX6B, COX6C, COX7A, COX7B, COX7C, COX8 and NDUFA4, which are encoded in the nuclear genome. The complex exists as a monomer or a dimer and forms supercomplexes (SCs) in the inner mitochondrial membrane with NADH-ubiquinone oxidoreductase (complex I, CI) and ubiquinol-cytochrome c oxidoreductase (cytochrome b-c1 complex, complex III, CIII), resulting in different assemblies (supercomplex SCI(1)III(2)IV(1) and megacomplex MCI(2)III(2)IV(2)). Found in a complex with TMEM177, COA6, COX18, COX20, SCO1 and SCO2. Interacts with TMEM177 in a COX20-dependent manner. Interacts with COX20. Interacts with COX16. The cofactor is Cu cation.

It is found in the mitochondrion inner membrane. The enzyme catalyses 4 Fe(II)-[cytochrome c] + O2 + 8 H(+)(in) = 4 Fe(III)-[cytochrome c] + 2 H2O + 4 H(+)(out). Its function is as follows. Component of the cytochrome c oxidase, the last enzyme in the mitochondrial electron transport chain which drives oxidative phosphorylation. The respiratory chain contains 3 multisubunit complexes succinate dehydrogenase (complex II, CII), ubiquinol-cytochrome c oxidoreductase (cytochrome b-c1 complex, complex III, CIII) and cytochrome c oxidase (complex IV, CIV), that cooperate to transfer electrons derived from NADH and succinate to molecular oxygen, creating an electrochemical gradient over the inner membrane that drives transmembrane transport and the ATP synthase. Cytochrome c oxidase is the component of the respiratory chain that catalyzes the reduction of oxygen to water. Electrons originating from reduced cytochrome c in the intermembrane space (IMS) are transferred via the dinuclear copper A center (CU(A)) of subunit 2 and heme A of subunit 1 to the active site in subunit 1, a binuclear center (BNC) formed by heme A3 and copper B (CU(B)). The BNC reduces molecular oxygen to 2 water molecules using 4 electrons from cytochrome c in the IMS and 4 protons from the mitochondrial matrix. In Petromyzon marinus (Sea lamprey), this protein is Cytochrome c oxidase subunit 2 (MT-CO2).